The sequence spans 243 residues: DNA repair protein RecO (243 aa).

This sequence belongs to the RecO family.

Functionally, involved in DNA repair and RecF pathway recombination. This Caulobacter sp. (strain K31) protein is DNA repair protein RecO.